The following is a 306-amino-acid chain: Ornithine carbamoyltransferase, anabolic (306 aa).

Residues 46-49, glutamine 73, arginine 97, and 124-127 each bind carbamoyl phosphate; these read STRT and HPTQ. Residues asparagine 156, aspartate 220, and 224-225 each bind L-ornithine; that span reads SM. Carbamoyl phosphate-binding positions include 260-261 and arginine 288; that span reads CL.

This sequence belongs to the aspartate/ornithine carbamoyltransferase superfamily. OTCase family. In terms of assembly, homohexamer; dimer of trimers.

The protein localises to the cytoplasm. The catalysed reaction is carbamoyl phosphate + L-ornithine = L-citrulline + phosphate + H(+). Its pathway is amino-acid biosynthesis; L-arginine biosynthesis; L-arginine from L-ornithine and carbamoyl phosphate: step 1/3. In terms of biological role, reversibly catalyzes the transfer of the carbamoyl group from carbamoyl phosphate (CP) to the N(epsilon) atom of ornithine (ORN) to produce L-citrulline, which is a substrate for argininosuccinate synthetase (ArgG) involved in the final step in arginine biosynthesis. The protein is Ornithine carbamoyltransferase, anabolic of Campylobacter jejuni subsp. jejuni serotype O:2 (strain ATCC 700819 / NCTC 11168).